The sequence spans 495 residues: MSEEMNDQMLVRRQKLQELYDLGIDPFGSKFDRSGLSSDLKEEWDQYSKEELVEKEADSHVAIAGRLMTKRGKGKAGFAHVQDLAGQIQIYVRKDQVGDDEFDLWKNADLGDIVGVEGVMFKTNTGELSVKAKKFTLLTKSLRPLPDKFHGLQDIEQRYRQRYLDLITNEDSTRTFINRSKIIQEMRNYLNNKGFLEVETPMMHQIAGGAAARPFVTHHNALDATLYMRIAIELHLKRLIVGGLEKVYEIGRVFRNEGVSTRHNPEFTMIELYEAYADYHDIMDLTESMVRHIANEVLGSAKVQYNGETIDLESAWTRLHIVDAVKEATGVDFYEVKSDEEAKALAKEHGIEIKDTMKYGHILNEFFEQKVEETLIQPTFIYGHPTEISPLAKKNPEDPRFTDRFELFIVGREHANAFTELNDPIDQKGRFEAQLVEKAQGNDEAHEMDEDYIEALEYGMPPTGGLGIGIDRLVMLLTDSPSIRDVLLFPYMRQK.

Positions 406 and 413 each coordinate Mg(2+).

This sequence belongs to the class-II aminoacyl-tRNA synthetase family. In terms of assembly, homodimer. Mg(2+) is required as a cofactor.

Its subcellular location is the cytoplasm. It catalyses the reaction tRNA(Lys) + L-lysine + ATP = L-lysyl-tRNA(Lys) + AMP + diphosphate. In Staphylococcus aureus (strain COL), this protein is Lysine--tRNA ligase.